Consider the following 536-residue polypeptide: MSIPFTRWPEEFARRYREKGYWQDLPLTDILTRHAASDSIAVIDGERQLSYRELNQAADNLACSLRRQGIKPGETALVQLGNVAELYITFFALLKLGVAPVLALFSHQRSELNAYASQIEPALLIADRQHALFSGDDFLNTFVTEHSSIRVVQLLNDSGEHNLQDAINHPAEDFTATPSPADEVAYFQLSGGTTGTPKLIPRTHNDYYYSVRRSVEICQFTQQTRYLCAIPAAHNYAMSSPGSLGVFLAGGTVVLAADPSATLCFPLIEKHQVNVTALVPPAVSLWLQALIEGESRAQLASLKLLQVGGARLSATLAARIPAEIGCQLQQVFGMAEGLVNYTRLDDSAEKIIHTQGYPMCPDDEVWVADAEGNPLPQGEVGRLMTRGPYTFRGYYKSPQHNASAFDANGFYCSGDLISIDPEGYITVQGREKDQINRGGEKIAAEEIENLLLRHPAVIYAALVSMEDELMGEKSCAYLVVKEPLRAVQVRRFLREQGIAEFKLPDRVECVDSLPLTAVGKVDKKQLRQWLASRASA.

7 residues coordinate substrate: Asn235, Ser240, Gly309, Val331, Ala335, Asp415, and Lys432. A phosphopantetheine binding region spans residues Gly438 to Gly439. Lys441 is a binding site for substrate.

The protein belongs to the ATP-dependent AMP-binding enzyme family. EntE subfamily. In terms of assembly, proteins EntB, EntD, EntE, and EntF form a multienzyme complex called enterobactin synthase. Monomer. EntA and EntE interact together.

Its subcellular location is the membrane. The catalysed reaction is 3 2,3-dihydroxybenzoate + 3 L-serine + 6 ATP = enterobactin + 6 AMP + 6 diphosphate + 4 H(+). It carries out the reaction 2,3-dihydroxybenzoate + holo-[ACP] + ATP = 2,3-dihydroxybenzoyl-[ACP] + AMP + diphosphate. It catalyses the reaction 2,3-dihydroxybenzoyl-5'-AMP + holo-[ACP] = 2,3-dihydroxybenzoyl-[ACP] + AMP + H(+). It functions in the pathway siderophore biosynthesis; enterobactin biosynthesis. Its activity is regulated as follows. Inhibited by the adenylate analogs, 5'-O-[N-(salicyl)sulfamoyl]adenosine (Sal-AMS) and 5'-O-[N-(2,3-dihydroxybenzoyl)sulfamoyl]adenosine (DHB-AMS). Adenylation of 2,3-dihydroxybenzoate (DHB) is enhanced by a protein-protein interaction between the EntA and EntE. Functionally, involved in the biosynthesis of the siderophore enterobactin (enterochelin), which is a macrocyclic trimeric lactone of N-(2,3-dihydroxybenzoyl)-serine. The serine trilactone serves as a scaffolding for the three catechol functionalities that provide hexadentate coordination for the tightly ligated iron(2+) atoms. EntE processes via a two-step adenylation-ligation reaction (bi-uni-uni-bi ping-pong mechanism). First, it catalyzes the activation of the carboxylate group of 2,3-dihydroxy-benzoate (DHB), via a reversible ATP-dependent pyrophosphate exchange reactions to yield the acyladenylate intermediate 2,3-dihydroxybenzoyl-AMP. It can also transfer AMP to salicylate, 2,4-dihydroxybenzoate, gentisate and 2,3,4-trihydroxybenzoate. In the second step, DHB is transferred from 2,3-dihydroxybenzoyl-AMP onto the phosphopantetheinylated EntB (holo-EntB) to form DHB-holo-EntB. Then this product will serve in the formation of the amide bond between 2,3-dihydroxybenzoate (DHB) and L-serine. It can also transfer adenylated salicylate to holo-EntB. The polypeptide is Enterobactin synthase component E (Escherichia coli (strain K12)).